A 391-amino-acid chain; its full sequence is Carbamoyl phosphate synthase small chain (391 aa).

The interval 1–189 is CPSase; the sequence is MIKSALLVLE…DLPAAKQPED (189 aa). L-glutamine-binding residues include Ser47, Gly241, and Gly243. The Glutamine amidotransferase type-1 domain occupies 193–380; that stretch reads HVVAYDYGVK…IELIEAYRAS (188 aa). Catalysis depends on Cys269, which acts as the Nucleophile. Leu270, Gln273, Asn311, Gly313, and Phe314 together coordinate L-glutamine. Residues His353 and Glu355 contribute to the active site.

Belongs to the CarA family. As to quaternary structure, composed of two chains; the small (or glutamine) chain promotes the hydrolysis of glutamine to ammonia, which is used by the large (or ammonia) chain to synthesize carbamoyl phosphate. Tetramer of heterodimers (alpha,beta)4.

It carries out the reaction hydrogencarbonate + L-glutamine + 2 ATP + H2O = carbamoyl phosphate + L-glutamate + 2 ADP + phosphate + 2 H(+). The catalysed reaction is L-glutamine + H2O = L-glutamate + NH4(+). It participates in amino-acid biosynthesis; L-arginine biosynthesis; carbamoyl phosphate from bicarbonate: step 1/1. The protein operates within pyrimidine metabolism; UMP biosynthesis via de novo pathway; (S)-dihydroorotate from bicarbonate: step 1/3. Small subunit of the glutamine-dependent carbamoyl phosphate synthetase (CPSase). CPSase catalyzes the formation of carbamoyl phosphate from the ammonia moiety of glutamine, carbonate, and phosphate donated by ATP, constituting the first step of 2 biosynthetic pathways, one leading to arginine and/or urea and the other to pyrimidine nucleotides. The small subunit (glutamine amidotransferase) binds and cleaves glutamine to supply the large subunit with the substrate ammonia. This is Carbamoyl phosphate synthase small chain from Yersinia pestis.